The following is a 200-amino-acid chain: Holliday junction branch migration complex subunit RuvA (200 aa).

Residues 1–64 form a domain I region; that stretch reads MIGHLRGIIV…EDAHTLYGFH (64 aa). Residues 65–143 are domain II; sequence NDHERRLFRA…RWHTNDTPSP (79 aa). Positions 144–148 are flexible linker; the sequence is EGLRS. The segment at 149–200 is domain III; it reads SNTQPTQDAISALMALGYKPQEAKRAIDAIQKPDLSAETLIRLALKQMVLGT.

It belongs to the RuvA family. In terms of assembly, homotetramer. Forms an RuvA(8)-RuvB(12)-Holliday junction (HJ) complex. HJ DNA is sandwiched between 2 RuvA tetramers; dsDNA enters through RuvA and exits via RuvB. An RuvB hexamer assembles on each DNA strand where it exits the tetramer. Each RuvB hexamer is contacted by two RuvA subunits (via domain III) on 2 adjacent RuvB subunits; this complex drives branch migration. In the full resolvosome a probable DNA-RuvA(4)-RuvB(12)-RuvC(2) complex forms which resolves the HJ.

The protein resides in the cytoplasm. Its function is as follows. The RuvA-RuvB-RuvC complex processes Holliday junction (HJ) DNA during genetic recombination and DNA repair, while the RuvA-RuvB complex plays an important role in the rescue of blocked DNA replication forks via replication fork reversal (RFR). RuvA specifically binds to HJ cruciform DNA, conferring on it an open structure. The RuvB hexamer acts as an ATP-dependent pump, pulling dsDNA into and through the RuvAB complex. HJ branch migration allows RuvC to scan DNA until it finds its consensus sequence, where it cleaves and resolves the cruciform DNA. This Coxiella burnetii (strain CbuG_Q212) (Coxiella burnetii (strain Q212)) protein is Holliday junction branch migration complex subunit RuvA.